The sequence spans 255 residues: MAVISMKQLLECGVHFGHQTRRWNPKMAKYIFTERNGIHVIDLQQTVKLADQAYEFVRDAAANDAVILFVGTKKQAAEAVADEATRAGQYFINHRWLGGTLTNWGTIQKRIARLKEIKRMEEEGTFDVLPKKEVALLNKQRARLEKFLGGIEDMPRIPDVMYVVDPHKEQIAVKEAKKLGIPVVAMVDTNADPDDIDIIIPANDDAIRAVKLITAKLADAIIEGRQGEDADIAFEADTQADSIEEIVEVVEGDNA.

Belongs to the universal ribosomal protein uS2 family.

The chain is Small ribosomal subunit protein uS2 from Streptococcus pyogenes serotype M49 (strain NZ131).